The following is a 494-amino-acid chain: Glutamyl-tRNA reductase (494 aa).

Residues 58–61 (TCNR), Ser118, 123–125 (EQQ), and Gln129 each bind substrate. Catalysis depends on Cys59, which acts as the Nucleophile. 205 to 210 (GAGAMA) is an NADP(+) binding site. Residues 448 to 494 (KGANAGSGQRKKQKPQENRVSTARAVYRSTYQDLTQASTPGGKDDDQ) form a disordered region. The segment covering 476 to 486 (STYQDLTQAST) has biased composition (polar residues).

It belongs to the glutamyl-tRNA reductase family. In terms of assembly, homodimer.

The catalysed reaction is (S)-4-amino-5-oxopentanoate + tRNA(Glu) + NADP(+) = L-glutamyl-tRNA(Glu) + NADPH + H(+). It participates in porphyrin-containing compound metabolism; protoporphyrin-IX biosynthesis; 5-aminolevulinate from L-glutamyl-tRNA(Glu): step 1/2. Its function is as follows. Catalyzes the NADPH-dependent reduction of glutamyl-tRNA(Glu) to glutamate 1-semialdehyde (GSA). The protein is Glutamyl-tRNA reductase of Corynebacterium urealyticum (strain ATCC 43042 / DSM 7109).